Reading from the N-terminus, the 63-residue chain is GTNASMRKAFNYQEVSKTAGKNCANCAQFIPGASASAAGACKVIPGDSQIQPTGYCDAYIVKK.

The [4Fe-4S] cluster site is built by cysteine 23, cysteine 26, cysteine 41, and cysteine 56.

The protein belongs to the high-potential iron-sulfur protein (HiPIP) family. In terms of assembly, homodimer.

Its function is as follows. Specific class of high-redox-potential 4Fe-4S ferredoxins. Functions in anaerobic electron transport in most purple and in some other photosynthetic bacteria and in at least one genus (Paracoccus) of halophilic, denitrifying bacteria. The chain is High-potential iron-sulfur protein (hip) from Rhodocyclus tenuis (Rhodospirillum tenue).